Here is a 197-residue protein sequence, read N- to C-terminus: Ribosome maturation factor RimM (197 aa).

The 73-residue stretch at 92 to 164 folds into the PRC barrel domain; it reads DEGWYEHELV…YILVTPPPGL (73 aa). A disordered region spans residues 167–197; the sequence is INVEDSGETSDAGESGPGEAEPGKAEAGDNA. A compositionally biased stretch (low complexity) spans 176-186; that stretch reads SDAGESGPGEA. Positions 187 to 197 are enriched in basic and acidic residues; sequence EPGKAEAGDNA.

This sequence belongs to the RimM family. As to quaternary structure, binds ribosomal protein uS19.

It localises to the cytoplasm. In terms of biological role, an accessory protein needed during the final step in the assembly of 30S ribosomal subunit, possibly for assembly of the head region. Essential for efficient processing of 16S rRNA. May be needed both before and after RbfA during the maturation of 16S rRNA. It has affinity for free ribosomal 30S subunits but not for 70S ribosomes. In Arthrobacter sp. (strain FB24), this protein is Ribosome maturation factor RimM.